The chain runs to 105 residues: Large ribosomal subunit protein uL24 (105 aa).

It belongs to the universal ribosomal protein uL24 family. As to quaternary structure, part of the 50S ribosomal subunit.

Functionally, one of two assembly initiator proteins, it binds directly to the 5'-end of the 23S rRNA, where it nucleates assembly of the 50S subunit. One of the proteins that surrounds the polypeptide exit tunnel on the outside of the subunit. This is Large ribosomal subunit protein uL24 from Halorhodospira halophila (strain DSM 244 / SL1) (Ectothiorhodospira halophila (strain DSM 244 / SL1)).